Consider the following 147-residue polypeptide: Large ribosomal subunit protein uL15 (147 aa).

Residues 1–58 (MRLHDLKPAEGSTKKKKRVGRGIGSGHGKTSGRGHKGQNARSGGGVRPGFEGGQMPLT) are disordered. Positions 42-52 (SGGGVRPGFEG) are enriched in gly residues.

This sequence belongs to the universal ribosomal protein uL15 family. As to quaternary structure, part of the 50S ribosomal subunit.

Binds to the 23S rRNA. The sequence is that of Large ribosomal subunit protein uL15 from Caldanaerobacter subterraneus subsp. tengcongensis (strain DSM 15242 / JCM 11007 / NBRC 100824 / MB4) (Thermoanaerobacter tengcongensis).